Here is a 503-residue protein sequence, read N- to C-terminus: Trehalose-6-phosphate synthase (503 aa).

Polar residues predominate over residues 1–14; sequence MTDQSGNGVRSGSA. Residues 1-20 are disordered; the sequence is MTDQSGNGVRSGSASEAPPS. R31 contributes to the D-glucose 6-phosphate binding site. 51 to 52 is a UDP-alpha-D-glucose binding site; the sequence is GG. D-glucose 6-phosphate contacts are provided by Y109 and D163. 2 residues coordinate UDP-alpha-D-glucose: R305 and K310. Residue R343 coordinates D-glucose 6-phosphate. UDP-alpha-D-glucose is bound at residue 408 to 412; sequence LVAKE.

This sequence belongs to the glycosyltransferase 20 family. In terms of assembly, homotetramer.

It catalyses the reaction ADP-alpha-D-glucose + D-glucose 6-phosphate = alpha,alpha-trehalose 6-phosphate + ADP + H(+). The catalysed reaction is CDP-alpha-D-glucose + D-glucose 6-phosphate = alpha,alpha-trehalose 6-phosphate + CDP + H(+). The enzyme catalyses GDP-alpha-D-glucose + D-glucose 6-phosphate = alpha,alpha-trehalose 6-phosphate + GDP + H(+). It carries out the reaction TDP-alpha-D-glucose + D-glucose 6-phosphate = 5-methyl-UDP + alpha,alpha-trehalose 6-phosphate + H(+). It catalyses the reaction D-glucose 6-phosphate + UDP-alpha-D-glucose = alpha,alpha-trehalose 6-phosphate + UDP + H(+). It functions in the pathway glycan biosynthesis; trehalose biosynthesis. Functionally, probably involved in the osmoprotection via the biosynthesis of trehalose and in the production of glycogen and alpha-glucan via the TreS-Pep2 branch involved in the biosynthesis of maltose-1-phosphate (M1P). Catalyzes the transfer of glucose from UDP-glucose (UDP-Glc) to D-glucose 6-phosphate (Glc-6-P) to form trehalose-6-phosphate. Probably also able to use ADP-Glc, CDP-Glc, GDP-Glc and TDP-Glc as glucosyl donors. This chain is Trehalose-6-phosphate synthase, found in Mycolicibacterium gilvum (strain PYR-GCK) (Mycobacterium gilvum (strain PYR-GCK)).